The following is a 797-amino-acid chain: Phenylalanine--tRNA ligase beta subunit (797 aa).

Residues Met40–Phe154 enclose the tRNA-binding domain. The 76-residue stretch at Pro407 to Ser482 folds into the B5 domain. Positions 460, 466, 469, and 470 each coordinate Mg(2+). Positions Pro704 to Arg797 constitute an FDX-ACB domain.

The protein belongs to the phenylalanyl-tRNA synthetase beta subunit family. Type 1 subfamily. As to quaternary structure, tetramer of two alpha and two beta subunits. It depends on Mg(2+) as a cofactor.

It is found in the cytoplasm. The enzyme catalyses tRNA(Phe) + L-phenylalanine + ATP = L-phenylalanyl-tRNA(Phe) + AMP + diphosphate + H(+). In Lactococcus lactis subsp. lactis (strain IL1403) (Streptococcus lactis), this protein is Phenylalanine--tRNA ligase beta subunit.